Consider the following 394-residue polypeptide: S-adenosylmethionine synthase 3 (394 aa).

A Mg(2+)-binding site is contributed by Glu-11. His-17 is a binding site for ATP. Glu-45 is a binding site for K(+). Positions 58 and 101 each coordinate L-methionine. ATP-binding positions include 169–171 (DGK), 237–240 (SGRF), Asp-248, 254–255 (RK), Ala-271, Lys-275, and Lys-279. Asp-248 provides a ligand contact to L-methionine. Lys-279 provides a ligand contact to L-methionine.

Belongs to the AdoMet synthase family. Homotetramer. Mn(2+) serves as cofactor. The cofactor is Mg(2+). It depends on Co(2+) as a cofactor. Requires K(+) as cofactor.

The protein resides in the cytoplasm. The enzyme catalyses L-methionine + ATP + H2O = S-adenosyl-L-methionine + phosphate + diphosphate. Its pathway is amino-acid biosynthesis; S-adenosyl-L-methionine biosynthesis; S-adenosyl-L-methionine from L-methionine: step 1/1. Functionally, catalyzes the formation of S-adenosylmethionine from methionine and ATP. The reaction comprises two steps that are both catalyzed by the same enzyme: formation of S-adenosylmethionine (AdoMet) and triphosphate, and subsequent hydrolysis of the triphosphate. In Hordeum vulgare (Barley), this protein is S-adenosylmethionine synthase 3 (SAM3).